A 504-amino-acid polypeptide reads, in one-letter code: Histidine ammonia-lyase (504 aa).

Residues 142 to 144 (ASG) constitute a cross-link (5-imidazolinone (Ala-Gly)). Ser-143 bears the 2,3-didehydroalanine (Ser) mark.

This sequence belongs to the PAL/histidase family. In terms of processing, contains an active site 4-methylidene-imidazol-5-one (MIO), which is formed autocatalytically by cyclization and dehydration of residues Ala-Ser-Gly.

The protein resides in the cytoplasm. The enzyme catalyses L-histidine = trans-urocanate + NH4(+). The protein operates within amino-acid degradation; L-histidine degradation into L-glutamate; N-formimidoyl-L-glutamate from L-histidine: step 1/3. The polypeptide is Histidine ammonia-lyase (Staphylococcus aureus (strain MSSA476)).